A 403-amino-acid chain; its full sequence is MCSIGEDDFGDEGGTHAMVAGSVPSGIDLSPGECSKCDISSDELFQLNFRTPECRDCFLAYVRHKFRAALGAAKVLPRDAEVLLVVDGSAESLVLLDMLYYAQTQNTFKRLHCSARMVYLEDQPVQGRDPADLESLEALSKRYEAFEFYVITLGLPVGSLKLLKDYSPVAQESNELIQKLSQLRSLTSRQDYLQQQRKNLIASVAQKLHCSHVFNSSISVDLATQLLTSIALGRGGSAALDVALLDDRLAAGIKLLRPLKDLTEQEVQFYVHAQRLQPLLMASSRYGQELGDAASLQNLTSAFVANLQKNFSSTVSTVFRTGGKISESTHPEQAKCNHCQSALDVELSDTLLAIEYSRSVSEAGVRLNEAIEDPEIISKRRMKLNDELCHACSSIEADFKNGS.

Belongs to the CTU2/NCS2 family.

It is found in the cytoplasm. It participates in tRNA modification; 5-methoxycarbonylmethyl-2-thiouridine-tRNA biosynthesis. Its function is as follows. Plays a central role in 2-thiolation of mcm(5)S(2)U at tRNA wobble positions of tRNA(Lys), tRNA(Glu) and tRNA(Gln). May act by forming a heterodimer with NCS6/CTU1 that ligates sulfur from thiocarboxylated URM1 onto the uridine of tRNAs at wobble position. In Drosophila ananassae (Fruit fly), this protein is Cytoplasmic tRNA 2-thiolation protein 2.